A 437-amino-acid chain; its full sequence is La-related protein 7 homolog (437 aa).

Positions 38–145 constitute an HTH La-type RNA-binding domain; it reads SKSPSLTIPK…KRKKKFDNRT (108 aa). One can recognise a xRRM domain in the interval 279-397; sequence ELSQSCFLKI…QRSSIDEIKA (119 aa). Residues 417 to 427 show a composition bias toward basic residues; it reads RRPVSKRKNKA. Positions 417-437 are disordered; it reads RRPVSKRKNKAINKMSTEVKK.

This sequence belongs to the LARP7 family. As to quaternary structure, component of the telomerase holoenzyme complex composed minimally of the catalytic subunit p123 and the telomerase RNA template component. Post-translationally, the mature form of the protein is a protein of 43 kDa, which is derived from a 51 kDa precursor by proteolytic cleavage.

The protein localises to the nucleus. Its subcellular location is the chromosome. It is found in the telomere. RNA-binding protein required for assembly of the holoenzyme telomerase ribonucleoprotein (RNP) complex. Specifically binds telomerase RNA and promotes its assembly with catalytic subunit p123, thereby stimulating enzymatic activity and processivity of p123. Telomerase is a ribonucleoprotein enzyme essential that copies new telomeric repeats onto chromosome ends and functions to maintain cell division. The protein is La-related protein 7 homolog of Euplotes aediculatus (Ciliate).